The following is a 215-amino-acid chain: Phosphatidylserine decarboxylase proenzyme (215 aa).

Ser185 functions as the Schiff-base intermediate with substrate; via pyruvic acid in the catalytic mechanism. Ser185 bears the Pyruvic acid (Ser); by autocatalysis mark.

Belongs to the phosphatidylserine decarboxylase family. PSD-A subfamily. As to quaternary structure, heterodimer of a large membrane-associated beta subunit and a small pyruvoyl-containing alpha subunit. The cofactor is pyruvate. Post-translationally, is synthesized initially as an inactive proenzyme. Formation of the active enzyme involves a self-maturation process in which the active site pyruvoyl group is generated from an internal serine residue via an autocatalytic post-translational modification. Two non-identical subunits are generated from the proenzyme in this reaction, and the pyruvate is formed at the N-terminus of the alpha chain, which is derived from the carboxyl end of the proenzyme. The post-translation cleavage follows an unusual pathway, termed non-hydrolytic serinolysis, in which the side chain hydroxyl group of the serine supplies its oxygen atom to form the C-terminus of the beta chain, while the remainder of the serine residue undergoes an oxidative deamination to produce ammonia and the pyruvoyl prosthetic group on the alpha chain.

It localises to the cell membrane. It carries out the reaction a 1,2-diacyl-sn-glycero-3-phospho-L-serine + H(+) = a 1,2-diacyl-sn-glycero-3-phosphoethanolamine + CO2. It functions in the pathway phospholipid metabolism; phosphatidylethanolamine biosynthesis; phosphatidylethanolamine from CDP-diacylglycerol: step 2/2. Functionally, catalyzes the formation of phosphatidylethanolamine (PtdEtn) from phosphatidylserine (PtdSer). The sequence is that of Phosphatidylserine decarboxylase proenzyme from Streptomyces griseus subsp. griseus (strain JCM 4626 / CBS 651.72 / NBRC 13350 / KCC S-0626 / ISP 5235).